The sequence spans 234 residues: Thiamine-phosphate synthase (234 aa).

Residues 65-69 (QYRNK) and asparagine 97 contribute to the 4-amino-2-methyl-5-(diphosphooxymethyl)pyrimidine site. Mg(2+) contacts are provided by aspartate 98 and aspartate 117. 4-amino-2-methyl-5-(diphosphooxymethyl)pyrimidine is bound at residue serine 136. 163–165 (SHT) contacts 2-[(2R,5Z)-2-carboxy-4-methylthiazol-5(2H)-ylidene]ethyl phosphate. Lysine 166 lines the 4-amino-2-methyl-5-(diphosphooxymethyl)pyrimidine pocket. Residues glycine 192 and 212–213 (IS) each bind 2-[(2R,5Z)-2-carboxy-4-methylthiazol-5(2H)-ylidene]ethyl phosphate.

Belongs to the thiamine-phosphate synthase family. Mg(2+) serves as cofactor.

It carries out the reaction 2-[(2R,5Z)-2-carboxy-4-methylthiazol-5(2H)-ylidene]ethyl phosphate + 4-amino-2-methyl-5-(diphosphooxymethyl)pyrimidine + 2 H(+) = thiamine phosphate + CO2 + diphosphate. It catalyses the reaction 2-(2-carboxy-4-methylthiazol-5-yl)ethyl phosphate + 4-amino-2-methyl-5-(diphosphooxymethyl)pyrimidine + 2 H(+) = thiamine phosphate + CO2 + diphosphate. The catalysed reaction is 4-methyl-5-(2-phosphooxyethyl)-thiazole + 4-amino-2-methyl-5-(diphosphooxymethyl)pyrimidine + H(+) = thiamine phosphate + diphosphate. It participates in cofactor biosynthesis; thiamine diphosphate biosynthesis; thiamine phosphate from 4-amino-2-methyl-5-diphosphomethylpyrimidine and 4-methyl-5-(2-phosphoethyl)-thiazole: step 1/1. Condenses 4-methyl-5-(beta-hydroxyethyl)thiazole monophosphate (THZ-P) and 2-methyl-4-amino-5-hydroxymethyl pyrimidine pyrophosphate (HMP-PP) to form thiamine monophosphate (TMP). This chain is Thiamine-phosphate synthase, found in Xylella fastidiosa (strain Temecula1 / ATCC 700964).